We begin with the raw amino-acid sequence, 332 residues long: Beta-ketoacyl-[acyl-carrier-protein] synthase III (332 aa).

Residues C112 and H252 contribute to the active site. An ACP-binding region spans residues 253-257 (QANLR). The active site involves N282.

This sequence belongs to the thiolase-like superfamily. FabH family. In terms of assembly, homodimer.

The protein localises to the cytoplasm. It carries out the reaction malonyl-[ACP] + acetyl-CoA + H(+) = 3-oxobutanoyl-[ACP] + CO2 + CoA. Its pathway is lipid metabolism; fatty acid biosynthesis. In terms of biological role, catalyzes the condensation reaction of fatty acid synthesis by the addition to an acyl acceptor of two carbons from malonyl-ACP. Catalyzes the first condensation reaction which initiates fatty acid synthesis and may therefore play a role in governing the total rate of fatty acid production. Possesses both acetoacetyl-ACP synthase and acetyl transacylase activities. Its substrate specificity determines the biosynthesis of branched-chain and/or straight-chain of fatty acids. This Syntrophomonas wolfei subsp. wolfei (strain DSM 2245B / Goettingen) protein is Beta-ketoacyl-[acyl-carrier-protein] synthase III.